We begin with the raw amino-acid sequence, 297 residues long: Undecaprenyl-diphosphatase (297 aa).

A run of 7 helical transmembrane segments spans residues 39 to 59 (PGAAYSAVIQLGTVAAVLIYF), 85 to 105 (ARLAWFVLVGTLPVGIAGLTL), 113 to 133 (FRSLYVISGSLIVLALILLVV), 151 to 171 (GILIGMWQALALIPGASRSGT), 190 to 210 (SFLLSIPATTLAGVFELKHLL), 220 to 240 (ALWVGTLVAFASGMAAIAWLL), and 249 to 269 (LVFVVYRVALGVLLLVLLQTG).

The protein belongs to the UppP family.

The protein localises to the cell inner membrane. The enzyme catalyses di-trans,octa-cis-undecaprenyl diphosphate + H2O = di-trans,octa-cis-undecaprenyl phosphate + phosphate + H(+). Its function is as follows. Catalyzes the dephosphorylation of undecaprenyl diphosphate (UPP). Confers resistance to bacitracin. The chain is Undecaprenyl-diphosphatase from Myxococcus xanthus (strain DK1622).